Here is a 1114-residue protein sequence, read N- to C-terminus: Zinc finger E-box-binding homeobox 1 (1114 aa).

Disordered stretches follow at residues Met-1–Cys-105 and Ala-142–Pro-163. A compositionally biased stretch (low complexity) spans Pro-15–Asn-30. A compositionally biased stretch (polar residues) spans Gln-149–Asn-160. 3 C2H2-type zinc fingers span residues Leu-170–His-193, Phe-200–His-222, and Phe-240–His-262. Residues Tyr-268–Cys-292 form a C2H2-type 4; atypical zinc finger. Disordered stretches follow at residues Ser-304–Pro-326, Asn-491–Ser-529, Lys-553–Pro-588, and Gln-636–Ser-716. The span at Ser-309–Pro-326 shows a compositional bias: low complexity. Over residues Lys-504–Glu-523 the composition is skewed to basic and acidic residues. Composition is skewed to polar residues over residues Ala-573 to Pro-584 and Gln-636 to Ala-681. The homeobox; atypical DNA-binding region spans Asn-581–Gln-640. A compositionally biased stretch (low complexity) spans Asn-682 to Ser-716. Positions Pro-767 to Thr-771 match the CTBP-binding motif motif. 2 stretches are compositionally biased toward polar residues: residues Ala-852–Ser-866 and Ser-874–Thr-890. The segment at Ala-852–Lys-898 is disordered. C2H2-type zinc fingers lie at residues Tyr-904–His-926 and His-932–His-954. The C2H2-type 7; atypical zinc-finger motif lies at Tyr-960 to His-981. Residues Glu-989 to Ala-1114 form a disordered region. Residues Glu-1031–Asp-1047 show a composition bias toward acidic residues. Residues Val-1048 to Asp-1062 show a composition bias toward basic and acidic residues. Residues Val-1063–Gly-1078 are compositionally biased toward acidic residues. A compositionally biased stretch (basic and acidic residues) spans Lys-1079–Val-1089.

The protein belongs to the delta-EF1/ZFH-1 C2H2-type zinc-finger family. Expression is developmentally regulated with high expression in mesoderm, nervous system and lens.

It localises to the nucleus. In terms of biological role, acts as a transcriptional repressor. Positively regulates neuronal differentiation. Represses transcription by binding to the E box-containing promoter. Binds to delta 1-crystallin enhancer core and represses lens-specific transcription. It also binds many other non-lens specific DNA sequences. The protein is Zinc finger E-box-binding homeobox 1 (ZEB1) of Gallus gallus (Chicken).